Reading from the N-terminus, the 612-residue chain is uncharacterized protein (612 aa).

Positions A213–R238 are disordered. Residues D421–L610 form the VWFA domain.

It localises to the cytoplasm. Its function is as follows. Component of the anaerobic respiratory chain that transforms nitrate to dinitrogen (denitrification). Function unknown, but essential for the denitrification process. This is an uncharacterized protein from Pseudomonas aeruginosa (strain ATCC 15692 / DSM 22644 / CIP 104116 / JCM 14847 / LMG 12228 / 1C / PRS 101 / PAO1).